We begin with the raw amino-acid sequence, 373 residues long: MGHFSSMFNGLARSFSIKKVKNNNGNCDAKEAADEMASEAKKKELILKSSGYVNVQGSNNLASLFSKRGEKGVNQDCALVWEGFGCQEDMIFCGIFDGHGPWGHYVAKQVRNSMPLSLLCNWQKILAQATLEPELDLEGSNKKISRFDIWKQSYLKTCATVDQELEHHRKIDSYYSGTTALTIVRQGEVIYVANVGDSRAVLAMESDEGSLVAVQLTLDFKPNLPQEKERIIGCKGRVFCLDDEPGVHRVWQPDAETPGLAMSRAFGDYCIKEYGLVSVPEVTQRHISTKDHFIILASDGIWDVISNQEAIEIVSSTAERPKAAKRLVEQAVRAWKKKRRGYSMDDMSVVCLFLHSSSSSSLSQHHHAMTILK.

In terms of domain architecture, PPM-type phosphatase spans 61 to 354; that stretch reads LASLFSKRGE…DDMSVVCLFL (294 aa). Residues aspartate 97, glycine 98, aspartate 299, and aspartate 345 each contribute to the Mn(2+) site.

The protein belongs to the PP2C family. It depends on Mg(2+) as a cofactor. Requires Mn(2+) as cofactor.

It catalyses the reaction O-phospho-L-seryl-[protein] + H2O = L-seryl-[protein] + phosphate. It carries out the reaction O-phospho-L-threonyl-[protein] + H2O = L-threonyl-[protein] + phosphate. The chain is Probable protein phosphatase 2C 73 (PPC6-7) from Arabidopsis thaliana (Mouse-ear cress).